We begin with the raw amino-acid sequence, 306 residues long: Pantothenate kinase (306 aa).

An ATP-binding site is contributed by 91-98 (GSVAVGKS).

This sequence belongs to the prokaryotic pantothenate kinase family.

It localises to the cytoplasm. It catalyses the reaction (R)-pantothenate + ATP = (R)-4'-phosphopantothenate + ADP + H(+). It participates in cofactor biosynthesis; coenzyme A biosynthesis; CoA from (R)-pantothenate: step 1/5. The sequence is that of Pantothenate kinase from Streptococcus pyogenes serotype M5 (strain Manfredo).